A 92-amino-acid chain; its full sequence is Small ribosomal subunit protein uS19 (92 aa).

This sequence belongs to the universal ribosomal protein uS19 family.

In terms of biological role, protein S19 forms a complex with S13 that binds strongly to the 16S ribosomal RNA. In Bacillus cytotoxicus (strain DSM 22905 / CIP 110041 / 391-98 / NVH 391-98), this protein is Small ribosomal subunit protein uS19.